The primary structure comprises 95 residues: Aspartyl/glutamyl-tRNA(Asn/Gln) amidotransferase subunit C (95 aa).

The protein belongs to the GatC family. Heterotrimer of A, B and C subunits.

It carries out the reaction L-glutamyl-tRNA(Gln) + L-glutamine + ATP + H2O = L-glutaminyl-tRNA(Gln) + L-glutamate + ADP + phosphate + H(+). It catalyses the reaction L-aspartyl-tRNA(Asn) + L-glutamine + ATP + H2O = L-asparaginyl-tRNA(Asn) + L-glutamate + ADP + phosphate + 2 H(+). In terms of biological role, allows the formation of correctly charged Asn-tRNA(Asn) or Gln-tRNA(Gln) through the transamidation of misacylated Asp-tRNA(Asn) or Glu-tRNA(Gln) in organisms which lack either or both of asparaginyl-tRNA or glutaminyl-tRNA synthetases. The reaction takes place in the presence of glutamine and ATP through an activated phospho-Asp-tRNA(Asn) or phospho-Glu-tRNA(Gln). In Methylocella silvestris (strain DSM 15510 / CIP 108128 / LMG 27833 / NCIMB 13906 / BL2), this protein is Aspartyl/glutamyl-tRNA(Asn/Gln) amidotransferase subunit C.